The sequence spans 99 residues: Large ribosomal subunit protein bL21 (99 aa).

Belongs to the bacterial ribosomal protein bL21 family. In terms of assembly, part of the 50S ribosomal subunit. Contacts protein L20.

This protein binds to 23S rRNA in the presence of protein L20. In Mycoplasmopsis pulmonis (strain UAB CTIP) (Mycoplasma pulmonis), this protein is Large ribosomal subunit protein bL21.